The primary structure comprises 409 residues: MPFSRTLLALSLGMALLQNPAFAAPPLSMTDGVAQVNTQDSNAWVEINKAAFEHNIRTLQTALAGKSQICAVLKADAYGHGIGLLMPSVIAMGVPCVGVASNEEARVVRESGFKGQLIRVRTAALSELEAALPYNMEELVGNLDFAVKASLIAEDHGRPLVVHLGLNSSGMSRNGVDMTTAQGRRDAVAITKVPNLEVRAIMTHFAVEDAADVRAGLKAFNQQAQWLMNVAQLDRSKITLHAANSFATLEVPESHLDMVRPGGALFGDTVPSHTEYKRVMQFKSHVASVNSYPKGNTVGYGRTYTLGRDSRLANITVGYSDGYRRAFTNKGIVLINGHRVPVVGKVSMNTLMVDVTDAPDVKSGDEVVLFGHQGKAEITQAEIEDINGALLADLYTVWGNSNPKILKDQ.

The N-terminal stretch at 1–23 is a signal peptide; the sequence is MPFSRTLLALSLGMALLQNPAFA. Cys-70 and Cys-96 form a disulfide bridge. The active-site Proton acceptor is the Lys-74. N6-(pyridoxal phosphate)lysine is present on Lys-74. Arg-173 provides a ligand contact to substrate. Tyr-300 acts as the Proton acceptor in catalysis. A substrate-binding site is contributed by Met-348.

Belongs to the alanine racemase family. Bsr subfamily. Homodimer. The cofactor is pyridoxal 5'-phosphate.

The protein localises to the periplasm. It catalyses the reaction an L-alpha-amino acid = a D-alpha-amino acid. It carries out the reaction L-lysine = D-lysine. The catalysed reaction is L-arginine = D-arginine. The enzyme catalyses L-ornithine = D-ornithine. It catalyses the reaction L-alanine = D-alanine. It carries out the reaction L-methionine = D-methionine. Functionally, amino-acid racemase able to utilize a broad range of substrates. Is mostly active with lysine and arginine and, to a lesser extent, with ornithine, whereas is about 10 times less active with alanine, methionine and ethionine. With phenylalanine as substrate only a trace activity is detectable, and is inactive with glutamate. Plays a key role in the catabolism of D-arginine and D-lysine, that allows P.taetrolens strain NBRC 3460 to grow on these basic D-amino acids as a sole carbon source. The protein is Broad specificity amino-acid racemase of Pseudomonas taetrolens.